Here is a 144-residue protein sequence, read N- to C-terminus: L-fucose mutarotase (144 aa).

Residue His22 is the Proton donor of the active site. Residues Asp30, Arg109, and 131–133 each bind substrate; that span reads YGN.

Belongs to the RbsD / FucU family. FucU mutarotase subfamily. Homodecamer.

The protein resides in the cytoplasm. The catalysed reaction is alpha-L-fucose = beta-L-fucose. It participates in carbohydrate metabolism; L-fucose metabolism. Involved in the anomeric conversion of L-fucose. The protein is L-fucose mutarotase of Haemophilus influenzae (strain 86-028NP).